The primary structure comprises 385 residues: uncharacterized protein (385 aa).

K194 bears the N6-(pyridoxal phosphate)lysine mark.

Belongs to the class-V pyridoxal-phosphate-dependent aminotransferase family. It depends on pyridoxal 5'-phosphate as a cofactor.

This is an uncharacterized protein from Methanocaldococcus jannaschii (strain ATCC 43067 / DSM 2661 / JAL-1 / JCM 10045 / NBRC 100440) (Methanococcus jannaschii).